The sequence spans 158 residues: SsrA-binding protein (158 aa).

The disordered stretch occupies residues 135 to 158 (DKRKTLKDRDWERDKQRGFKKDLD). The span at 141–158 (KDRDWERDKQRGFKKDLD) shows a compositional bias: basic and acidic residues.

Belongs to the SmpB family.

It is found in the cytoplasm. Functionally, required for rescue of stalled ribosomes mediated by trans-translation. Binds to transfer-messenger RNA (tmRNA), required for stable association of tmRNA with ribosomes. tmRNA and SmpB together mimic tRNA shape, replacing the anticodon stem-loop with SmpB. tmRNA is encoded by the ssrA gene; the 2 termini fold to resemble tRNA(Ala) and it encodes a 'tag peptide', a short internal open reading frame. During trans-translation Ala-aminoacylated tmRNA acts like a tRNA, entering the A-site of stalled ribosomes, displacing the stalled mRNA. The ribosome then switches to translate the ORF on the tmRNA; the nascent peptide is terminated with the 'tag peptide' encoded by the tmRNA and targeted for degradation. The ribosome is freed to recommence translation, which seems to be the essential function of trans-translation. This chain is SsrA-binding protein, found in Psychrobacter arcticus (strain DSM 17307 / VKM B-2377 / 273-4).